We begin with the raw amino-acid sequence, 404 residues long: Argininosuccinate synthase (404 aa).

Residues 10-18 (AYSGGVDTS) and alanine 38 contribute to the ATP site. Tyrosine 89 lines the L-citrulline pocket. Glycine 119 lines the ATP pocket. Residues threonine 121, asparagine 125, and aspartate 126 each coordinate L-aspartate. Asparagine 125 provides a ligand contact to L-citrulline. 5 residues coordinate L-citrulline: arginine 129, serine 177, serine 186, glutamate 262, and tyrosine 274.

It belongs to the argininosuccinate synthase family. Type 1 subfamily. As to quaternary structure, homotetramer.

The protein resides in the cytoplasm. It catalyses the reaction L-citrulline + L-aspartate + ATP = 2-(N(omega)-L-arginino)succinate + AMP + diphosphate + H(+). It functions in the pathway amino-acid biosynthesis; L-arginine biosynthesis; L-arginine from L-ornithine and carbamoyl phosphate: step 2/3. This chain is Argininosuccinate synthase, found in Prochlorococcus marinus (strain MIT 9312).